A 270-amino-acid polypeptide reads, in one-letter code: Non-structural maintenance of chromosomes element 1 homolog (270 aa).

The RING-type; atypical zinc-finger motif lies at 185 to 226 (CNVCHKIAIQCQLCENCGIPLHLQCAGIYFRGIANPLCPNCK). Residues 236 to 270 (LSQVSSQGPSHSQAAPVRGRNQRSRNISTVARTSR) form a disordered region. 2 stretches are compositionally biased toward polar residues: residues 237–248 (SQVSSQGPSHSQ) and 259–270 (SRNISTVARTSR).

It belongs to the NSE1 family. In terms of assembly, component of the SMC5-SMC6 complex.

Its subcellular location is the nucleus. It is found in the chromosome. It localises to the telomere. It carries out the reaction S-ubiquitinyl-[E2 ubiquitin-conjugating enzyme]-L-cysteine + [acceptor protein]-L-lysine = [E2 ubiquitin-conjugating enzyme]-L-cysteine + N(6)-ubiquitinyl-[acceptor protein]-L-lysine.. In terms of biological role, RING-type zinc finger-containing E3 ubiquitin ligase that assembles with melanoma antigen protein (MAGE) to catalyze the direct transfer of ubiquitin from E2 ubiquitin-conjugating enzyme to a specific substrate. Within MAGE-RING ubiquitin ligase complex, MAGE stimulates and specifies ubiquitin ligase activity likely through recruitment and/or stabilization of the E2 ubiquitin-conjugating enzyme at the E3:substrate complex. Involved in maintenance of genome integrity, DNA damage response and DNA repair. In Xenopus tropicalis (Western clawed frog), this protein is Non-structural maintenance of chromosomes element 1 homolog (nsmce1).